The sequence spans 197 residues: Segregation and condensation protein B (197 aa).

This sequence belongs to the ScpB family. As to quaternary structure, homodimer. Homodimerization may be required to stabilize the binding of ScpA to the Smc head domains. Component of a cohesin-like complex composed of ScpA, ScpB and the Smc homodimer, in which ScpA and ScpB bind to the head domain of Smc. The presence of the three proteins is required for the association of the complex with DNA.

Its subcellular location is the cytoplasm. Participates in chromosomal partition during cell division. May act via the formation of a condensin-like complex containing Smc and ScpA that pull DNA away from mid-cell into both cell halves. This Bacillus licheniformis (strain ATCC 14580 / DSM 13 / JCM 2505 / CCUG 7422 / NBRC 12200 / NCIMB 9375 / NCTC 10341 / NRRL NRS-1264 / Gibson 46) protein is Segregation and condensation protein B.